Reading from the N-terminus, the 156-residue chain is MNFSPNTLGSFESCAEVVRSLGCALVDLQWSVSAVSRRVQQAQGRARAVIYSAGGVTLDVCARVHRILVPRLQALGGVRTVFLEVGSPGERVIRNAAEFSIFLGETVKVWFCTGQFQVGTLAFADETCLTLTAGGVPVTIPYVQLTKAQLHPAVRA.

This sequence belongs to the RimP family.

The protein resides in the cytoplasm. Functionally, required for maturation of 30S ribosomal subunits. The protein is Ribosome maturation factor RimP of Treponema pallidum (strain Nichols).